Consider the following 182-residue polypeptide: Hypoxanthine/guanine phosphoribosyltransferase (182 aa).

It belongs to the purine/pyrimidine phosphoribosyltransferase family. Archaeal HPRT subfamily. In terms of assembly, homodimer.

The protein resides in the cytoplasm. It catalyses the reaction IMP + diphosphate = hypoxanthine + 5-phospho-alpha-D-ribose 1-diphosphate. The catalysed reaction is GMP + diphosphate = guanine + 5-phospho-alpha-D-ribose 1-diphosphate. Its pathway is purine metabolism; IMP biosynthesis via salvage pathway; IMP from hypoxanthine: step 1/1. Functionally, catalyzes a salvage reaction resulting in the formation of IMP that is energically less costly than de novo synthesis. This chain is Hypoxanthine/guanine phosphoribosyltransferase, found in Methanospirillum hungatei JF-1 (strain ATCC 27890 / DSM 864 / NBRC 100397 / JF-1).